A 218-amino-acid polypeptide reads, in one-letter code: Large ribosomal subunit protein eL13 (218 aa).

The disordered stretch occupies residues 196 to 218 (AKRAKEAAESEDAAKGDPKKAKK). Over residues 199 to 218 (AKEAAESEDAAKGDPKKAKK) the composition is skewed to basic and acidic residues.

The protein belongs to the eukaryotic ribosomal protein eL13 family. Component of the 60S large ribosomal subunit (LSU).

It localises to the cytoplasm. In terms of biological role, component of the ribosome, a large ribonucleoprotein complex responsible for the synthesis of proteins in the cell. The small ribosomal subunit (SSU) binds messenger RNAs (mRNAs) and translates the encoded message by selecting cognate aminoacyl-transfer RNA (tRNA) molecules. The large subunit (LSU) contains the ribosomal catalytic site termed the peptidyl transferase center (PTC), which catalyzes the formation of peptide bonds, thereby polymerizing the amino acids delivered by tRNAs into a polypeptide chain. The nascent polypeptides leave the ribosome through a tunnel in the LSU and interact with protein factors that function in enzymatic processing, targeting, and the membrane insertion of nascent chains at the exit of the ribosomal tunnel. As part of the LSU, it is probably required for its formation and the maturation of rRNAs. The chain is Large ribosomal subunit protein eL13 (RpL13) from Drosophila melanogaster (Fruit fly).